Consider the following 115-residue polypeptide: Large ribosomal subunit protein uL22 (115 aa).

The protein belongs to the universal ribosomal protein uL22 family. Part of the 50S ribosomal subunit.

This protein binds specifically to 23S rRNA; its binding is stimulated by other ribosomal proteins, e.g. L4, L17, and L20. It is important during the early stages of 50S assembly. It makes multiple contacts with different domains of the 23S rRNA in the assembled 50S subunit and ribosome. Functionally, the globular domain of the protein is located near the polypeptide exit tunnel on the outside of the subunit, while an extended beta-hairpin is found that lines the wall of the exit tunnel in the center of the 70S ribosome. The protein is Large ribosomal subunit protein uL22 of Streptomyces griseus subsp. griseus (strain JCM 4626 / CBS 651.72 / NBRC 13350 / KCC S-0626 / ISP 5235).